The primary structure comprises 860 residues: Alanine--tRNA ligase (860 aa).

Zn(2+) contacts are provided by H553, H557, C655, and H659.

The protein belongs to the class-II aminoacyl-tRNA synthetase family. Zn(2+) serves as cofactor.

Its subcellular location is the cytoplasm. It carries out the reaction tRNA(Ala) + L-alanine + ATP = L-alanyl-tRNA(Ala) + AMP + diphosphate. Catalyzes the attachment of alanine to tRNA(Ala) in a two-step reaction: alanine is first activated by ATP to form Ala-AMP and then transferred to the acceptor end of tRNA(Ala). Also edits incorrectly charged Ser-tRNA(Ala) and Gly-tRNA(Ala) via its editing domain. The chain is Alanine--tRNA ligase from Legionella pneumophila (strain Corby).